Reading from the N-terminus, the 413-residue chain is Protein esc1 (413 aa).

Polar residues predominate over residues 1–22 (MSSYALPSMQPTPTSSIPLRQM). Disordered regions lie at residues 1–202 (MSSY…NQPS) and 230–265 (MYVP…YSQG). A compositionally biased stretch (low complexity) spans 23-42 (SQPTTSAPSNSASSTPYSPQ). Residues 43–63 (QVPLTHNSYPLSTPSSFQHGQ) show a composition bias toward polar residues. 2 stretches are compositionally biased toward low complexity: residues 86 to 103 (SAAP…STAA) and 116 to 126 (SSSSYVYSVPP). Polar residues predominate over residues 127-136 (TNSTTSQASA). Over residues 150-197 (STTLTPSTTDSSSTDVSSSDSVSTSASSSNASNTVSVTSPASSSATPL) the composition is skewed to low complexity. One can recognise a bHLH domain in the interval 334–385 (ELRTSHKLAERKRRKEIKELFDDLKDALPLDKSTKSSKWGLLTRAIQYIEQL).

As to quaternary structure, efficient DNA binding requires dimerization with another bHLH protein.

The protein resides in the nucleus. Functionally, involved in the sexual differentiation process. Modulate the ability of the cell to differentiate in response to the nitrogen starvation signal; in particular in response to decreases in the level of cellular cAMP. In Schizosaccharomyces pombe (strain 972 / ATCC 24843) (Fission yeast), this protein is Protein esc1 (esc1).